A 4351-amino-acid polypeptide reads, in one-letter code: Protocadherin Fat 2 (4351 aa).

Positions 1-18 (MTLVLLGVAMVLLHRAAC) are cleaved as a signal peptide. The Extracellular portion of the chain corresponds to 19–4050 (EKPLEETITP…IKRGDWGQQE (4032 aa)). Cadherin domains follow at residues 34 to 148 (THSL…KPLF) and 149 to 256 (SPPS…PPVI). N-linked (GlcNAc...) asparagine glycosylation is found at asparagine 39, asparagine 210, asparagine 280, and asparagine 330. Cadherin domains are found at residues 363–458 (EKAV…APVF), 459–564 (NRSS…QPMF), 565–669 (EEVN…VPVQ), 716–820 (DHFP…PPRF), 821–925 (PPGG…PPQC), 926–1032 (ITEH…SPHF), 1033–1142 (SSFV…RPVF), 1138–1242 (SRPV…SPMF), 1243–1346 (SHKL…SSIP), 1350–1448 (DESH…RPQF), 1449–1555 (LQDH…SPHF), 1556–1660 (TQPR…APIF), 1661–1758 (SKDE…APAF), 1759–1872 (LKST…PPRF), 1873–1968 (SEQI…SLQF), 1969–2070 (DQDI…IPEF), 2071–2171 (QHLP…NPLF), 2172–2272 (QSPY…PPTF), 2273–2379 (SQLV…PPEF), 2380–2481 (REPQ…SPEF), 2482–2585 (QQNV…APQF), 2586–2692 (KASG…LPKF), 2693–2799 (SEPL…RPVF), 2800–2908 (EADP…PPRF), 2909–3013 (ASED…SPQC), 3014–3115 (SQLL…APRF), 3116–3220 (FPSH…LPIF), 3221–3323 (LNSE…HPRF), 3324–3428 (THDL…PPRF), 3429–3533 (FQLN…PPST), and 3534–3631 (LPLE…APQQ). 4 N-linked (GlcNAc...) asparagine glycosylation sites follow: asparagine 459, asparagine 568, asparagine 627, and asparagine 789. Asparagine 996 carries an N-linked (GlcNAc...) asparagine glycan. N-linked (GlcNAc...) asparagine glycans are attached at residues asparagine 1175, asparagine 1276, and asparagine 1417. Residues asparagine 1899, asparagine 1998, asparagine 2007, asparagine 2102, asparagine 2165, asparagine 2183, asparagine 2325, asparagine 2368, asparagine 2387, asparagine 2430, asparagine 2470, asparagine 2547, and asparagine 2597 are each glycosylated (N-linked (GlcNAc...) asparagine). Residues asparagine 3127, asparagine 3278, and asparagine 3312 are each glycosylated (N-linked (GlcNAc...) asparagine). N-linked (GlcNAc...) asparagine glycans are attached at residues asparagine 3432, asparagine 3603, asparagine 3770, asparagine 3774, asparagine 3815, asparagine 3842, asparagine 3875, and asparagine 3906. The Laminin G-like domain maps to 3775–3946 (GTTWRFSGQS…YLETWALSQC (172 aa)). Intrachain disulfides connect cysteine 3914–cysteine 3946, cysteine 3953–cysteine 3964, cysteine 3958–cysteine 3974, and cysteine 3976–cysteine 3985. 2 consecutive EGF-like domains span residues 3949–3986 (PGTT…RNCE) and 3988–4024 (GREN…DRCE). N-linked (GlcNAc...) asparagine glycosylation occurs at asparagine 3991. 3 disulfides stabilise this stretch: cysteine 3992–cysteine 4003, cysteine 3997–cysteine 4012, and cysteine 4014–cysteine 4023. Residues 4051-4071 (FLVIIVALPLLIIATVGLLLY) form a helical membrane-spanning segment. Residues 4072–4351 (CRRCKSHKPV…DYGSCEEVMF (280 aa)) are Cytoplasmic-facing. The disordered stretch occupies residues 4313 to 4340 (DCEVNGGPAPGRSQPRAPPNYEGSDMVE).

Homodimer.

The protein resides in the cell membrane. It localises to the cell junction. Its subcellular location is the golgi apparatus. It is found in the trans-Golgi network. Involved in the regulation of cell migration. May be involved in mediating the organization of the parallel fibers of granule cells during cerebellar development. The polypeptide is Protocadherin Fat 2 (Fat2) (Mus musculus (Mouse)).